A 692-amino-acid polypeptide reads, in one-letter code: MEEEKVKEGLWELAYNLWWTWNPPAKELFRSIDPLLWKETKENPIELLRKTKLLENKLKDEDFISHFKYVYSLYKTYMNRHSKYEDTYKKPIVFLSPEYGLHHTLLIYAGGLGFLAGDILKESSDLGFPLIGVGFMYPQGYVKQRIRVDGWQEDLDAQNQKELMPVKKVLDKEGKWLKCYVYVRDEKVYFGVWEVNVGKTKLYLLDTNVEENTPWNREISSRLYVPDKDLRLRQQIVLGFGTVILLEKLGIDAGGFHINEDYPSFVFLAEIFKLLKKGLTWDKAIEEVRKISLFTTHTPLRVAVNTYPFHMIEEQFLFVKDVYGIDVKKVLELGTNPEDPSEGFNSTIMSLRLAKYVNAVSKRHQEVSSKMWSFLFKEKENPIDYVTNGVHFPTWICSDLRRLYEEYLGENFVELHDHKSLWELIRDIPDEELWEYHIRNKERLIEHIKDRARERWVKEKADPSILMAEGLFLDSDVLTVGFARRMTGYKRPDLIFTDVERLKKIVNDSERPVQIIFAGKAHPADIEGKKIIQRIFNFAKDPEFGGRIAFVEDYDELLAHYMVRGVDVWLNNPLPPLEACGTSGMKASMNGVLHLSILDGWWIEGYNGKNGWAFGDYEVEGDRNRADAEAIYNILENEVIPLYYERDERGVPVKWISMMKEAIKSITPNFCSRRMLKDYINKFYSKILKEEG.

An N6-(pyridoxal phosphate)lysine modification is found at Lys586.

It belongs to the glycogen phosphorylase family. It depends on pyridoxal 5'-phosphate as a cofactor.

It catalyses the reaction [(1-&gt;4)-alpha-D-glucosyl](n) + phosphate = [(1-&gt;4)-alpha-D-glucosyl](n-1) + alpha-D-glucose 1-phosphate. Its function is as follows. Phosphorylase is an important allosteric enzyme in carbohydrate metabolism. Enzymes from different sources differ in their regulatory mechanisms and in their natural substrates. However, all known phosphorylases share catalytic and structural properties. This chain is Glycogen phosphorylase (glgP), found in Aquifex aeolicus (strain VF5).